Here is a 107-residue protein sequence, read N- to C-terminus: MEDPRCAPLLLLLLLPLLLTPPAGDAAVITGACDKDSQCGGGMCCAVSIWVKSIRICTPMGQVGDSCHPLTRKVPFWGRRMHHTCPCLPGLACLRTSFNRFICLARK.

A signal peptide spans 1 to 26; that stretch reads MEDPRCAPLLLLLLLPLLLTPPAGDA. Disulfide bonds link C33/C45, C39/C57, C44/C85, C67/C93, and C87/C103.

Belongs to the AVIT (prokineticin) family. In terms of tissue distribution, expressed at high levels in testis and at lower levels in brain, lung, ovary, spleen, thymus and uterus.

It is found in the secreted. In terms of biological role, may function as an output molecule from the suprachiasmatic nucleus (SCN) that transmits behavioral circadian rhythm. May also function locally within the SCN to synchronize output. Potently contracts gastrointestinal (GI) smooth muscle. The protein is Prokineticin-2 (Prok2) of Rattus norvegicus (Rat).